The following is a 175-amino-acid chain: ATP synthase subunit delta (175 aa).

The protein belongs to the ATPase delta chain family. F-type ATPases have 2 components, F(1) - the catalytic core - and F(0) - the membrane proton channel. F(1) has five subunits: alpha(3), beta(3), gamma(1), delta(1), epsilon(1). F(0) has three main subunits: a(1), b(2) and c(10-14). The alpha and beta chains form an alternating ring which encloses part of the gamma chain. F(1) is attached to F(0) by a central stalk formed by the gamma and epsilon chains, while a peripheral stalk is formed by the delta and b chains.

The protein localises to the cell membrane. Functionally, f(1)F(0) ATP synthase produces ATP from ADP in the presence of a proton or sodium gradient. F-type ATPases consist of two structural domains, F(1) containing the extramembraneous catalytic core and F(0) containing the membrane proton channel, linked together by a central stalk and a peripheral stalk. During catalysis, ATP synthesis in the catalytic domain of F(1) is coupled via a rotary mechanism of the central stalk subunits to proton translocation. In terms of biological role, this protein is part of the stalk that links CF(0) to CF(1). It either transmits conformational changes from CF(0) to CF(1) or is implicated in proton conduction. In Brevibacillus brevis (strain 47 / JCM 6285 / NBRC 100599), this protein is ATP synthase subunit delta.